The sequence spans 411 residues: MINTFTYFEPEYLIDKNLIFLYFDFDAFFASVEELENPELVNQPLIVGNRFSRSVVSTCNYVARSYGIRSGMSILKALELCPNAIFAHSNFRNYRKHSKRIFSVIESTFSLKIDVLSVDEGVACFQNISFKKAFLIAKKIKNFVFQNLRIKISIGISDHFLIAKIFSNQAKPFGIKSCSVKDIKKKLWPLPITEIPGIGEKHIDLVFKNNFYKINDLAVCEDASLLKKVFGNFWESLKAVSLGKWYTDNNNQVKSRSFAVSETLEDLNYSNNQLNKKLTQIFDQLFIRLQLSSQVCKGIVVQLKSNDFIVNSHSNKMKKYSNDYRKLLSITKRLFNRLLINTEKNVRLIGISFFDLKKIDTDEGQKKSLFYQFIPKSISKLSEESSLDKLIFDINESFGFEIIKRANKLKS.

The UmuC domain maps to 20–199 (FLYFDFDAFF…LPITEIPGIG (180 aa)).

The protein belongs to the DNA polymerase type-Y family.

This is an uncharacterized protein from Mycoplasma genitalium (strain ATCC 33530 / DSM 19775 / NCTC 10195 / G37) (Mycoplasmoides genitalium).